Consider the following 87-residue polypeptide: CRISPR-associated endoribonuclease Cas2 (87 aa).

Residue Asp8 participates in Mg(2+) binding.

Belongs to the CRISPR-associated endoribonuclease Cas2 protein family. As to quaternary structure, homodimer, forms a heterotetramer with a Cas1 homodimer. Mg(2+) serves as cofactor.

In terms of biological role, CRISPR (clustered regularly interspaced short palindromic repeat), is an adaptive immune system that provides protection against mobile genetic elements (viruses, transposable elements and conjugative plasmids). CRISPR clusters contain sequences complementary to antecedent mobile elements and target invading nucleic acids. CRISPR clusters are transcribed and processed into CRISPR RNA (crRNA). Functions as a ssRNA-specific endoribonuclease. Involved in the integration of spacer DNA into the CRISPR cassette. The chain is CRISPR-associated endoribonuclease Cas2 from Methanosarcina acetivorans (strain ATCC 35395 / DSM 2834 / JCM 12185 / C2A).